The chain runs to 147 residues: Large ribosomal subunit protein uL15 (147 aa).

The disordered stretch occupies residues 1-55; the sequence is MKLHEIAPQPGSTKRRRRVGRGVSAGQGASCGLGMRGQKSRSGTGTRPGFEGGQM. The segment covering 23 to 35 has biased composition (gly residues); that stretch reads VSAGQGASCGLGM.

The protein belongs to the universal ribosomal protein uL15 family. As to quaternary structure, part of the 50S ribosomal subunit.

In terms of biological role, binds to the 23S rRNA. The protein is Large ribosomal subunit protein uL15 of Microcystis aeruginosa (strain NIES-843 / IAM M-2473).